Reading from the N-terminus, the 1342-residue chain is Cytokinesis protein sepH (1342 aa).

Positions 1 to 10 (MVSRSSEGAE) are enriched in low complexity. The disordered stretch occupies residues 1–47 (MVSRSSEGAEGPPPSAPKPPNTPAKSRLSRLGSSPSKREDKSRDDRM). A compositionally biased stretch (pro residues) spans 11–22 (GPPPSAPKPPNT). The span at 36–47 (SKREDKSRDDRM) shows a compositional bias: basic and acidic residues. A Protein kinase domain is found at 61-308 (YQLGDCLGKG…ARKLLKHPWI (248 aa)). Residues 67–75 (LGKGAFGSV) and Lys90 each bind ATP. Asp180 (proton acceptor) is an active-site residue. Disordered regions lie at residues 336–396 (NEAL…EEDN), 441–486 (IKSD…QLQE), and 552–591 (ADEN…ISVK). Residues 369 to 379 (KDTLPSPVSRN) are compositionally biased toward polar residues. A coiled-coil region spans residues 658-695 (FAQLEEGLDEMDLEANIARDKHARLRNQVEGLVSSLKT). Residues 1201-1342 (SEAYGMGKRK…QTQADADWTP (142 aa)) are disordered. Basic residues predominate over residues 1207-1217 (GKRKPMVRRRS). Polar residues-rich tracts occupy residues 1218-1244 (TSAT…SQSK) and 1273-1290 (DGST…TGAS). Positions 1315–1324 (RPSSSLSRRQ) are enriched in low complexity.

The protein belongs to the protein kinase superfamily. Ser/Thr protein kinase family. CDC7 subfamily. It depends on Mg(2+) as a cofactor.

The catalysed reaction is L-seryl-[protein] + ATP = O-phospho-L-seryl-[protein] + ADP + H(+). It carries out the reaction L-threonyl-[protein] + ATP = O-phospho-L-threonyl-[protein] + ADP + H(+). Its function is as follows. Required for early events during cytokinesis including localization of cytoskeletal components to the cytokinetic ring. In Aspergillus terreus (strain NIH 2624 / FGSC A1156), this protein is Cytokinesis protein sepH.